Reading from the N-terminus, the 3011-residue chain is Genome polyprotein (3011 aa).

Ser2 carries the N-acetylserine; by host modification. The segment at 2–23 (STNPKPQRKTKRNTNRRPQDVK) is interaction with STAT1. Positions 2 to 58 (STNPKPQRKTKRNTNRRPQDVKFPGGGQIVGGVYLLPRRGPRLGVRATRKTSERSQP) are interaction with EIF2AK2/PKR. Residues 2 to 59 (STNPKPQRKTKRNTNRRPQDVKFPGGGQIVGGVYLLPRRGPRLGVRATRKTSERSQPR) are interaction with DDX3X. Residues 2 to 75 (STNPKPQRKT…PKARRPEGRT (74 aa)) are disordered. Over 2-168 (STNPKPQRKT…EDGVNYATGN (167 aa)) the chain is Cytoplasmic. Short sequence motifs (nuclear localization signal) lie at residues 5-13 (PKPQRKTKR) and 38-43 (PRRGPR). Residues 7–16 (PQRKTKRNTN) show a composition bias toward basic residues. Positions 32-47 (GGVYLLPRRGPRLGVR) are enriched in low complexity. Ser53 is modified (phosphoserine; by host). 2 short sequence motifs (nuclear localization signal) span residues 58–64 (PRGRRQP) and 66–71 (PKARRP). Residues 58-68 (PRGRRQPIPKA) are compositionally biased toward basic residues. Residue Ser99 is modified to Phosphoserine; by host. Residues 112–152 (PRRRSRNLGKVIDTLTCGFADLMGYIPLVGAPLGGAARALA) are important for endoplasmic reticulum and mitochondrial localization. The residue at position 116 (Ser116) is a Phosphoserine; by host PKA. The interval 122-173 (VIDTLTCGFADLMGYIPLVGAPLGGAARALAHGVRVLEDGVNYATGNLPGCS) is interaction with APOA2. Residues 164–167 (YATG) form an important for lipid droplets localization region. A helical transmembrane segment spans residues 169-189 (LPGCSFSIFLLALLSCLTVPA). A propeptide spans 178-191 (LLALLSCLTVPASA) (ER anchor for the core protein, removed in mature form by host signal peptidase). Over 190–358 (SAYQVRNSSG…AGAHWGVLAG (169 aa)) the chain is Lumenal. N-linked (GlcNAc...) asparagine; by host glycosylation is found at Asn196, Asn209, and Asn234. The segment at 265 to 296 (LVGSATLCSALYVGDLCGSVFLVGQLFTFSPR) is important for fusion. Asn305 carries an N-linked (GlcNAc...) asparagine; by host glycan. Residues 359–379 (IKYFSMVGNWAKVLVVLLLFA) traverse the membrane as a helical segment. Topologically, residues 380–725 (GVDAETHVTG…WEYVVLLFLL (346 aa)) are lumenal. The tract at residues 385 to 411 (THVTGGNAGRTTAGLVGLLTPGAKQNI) is HVR1. 4 N-linked (GlcNAc...) (high mannose) asparagine; by host glycosylation sites follow: Asn417, Asn423, Asn430, and Asn448. Disulfide bonds link Cys429/Cys552, Cys452/Cys459, Cys486/Cys494, and Cys503/Cys508. Residues 474–479 (YANGSG) are HVR2. Asn476 is a glycosylation site (N-linked (GlcNAc...) (high mannose) asparagine; by host). A CD81-binding 1 region spans residues 480-493 (LDERPYCWHYPPRP). 2 N-linked (GlcNAc...) (high mannose) asparagine; by host glycosylation sites follow: Asn532 and Asn540. Positions 544 to 551 (PPLGNWFG) are CD81-binding 2. N-linked (GlcNAc...) (high mannose) asparagine; by host glycosylation is present at Asn556. The cysteines at positions 564 and 569 are disulfide-linked. Asn576 carries an N-linked (GlcNAc...) (high mannose) asparagine; by host glycan. 3 cysteine pairs are disulfide-bonded: Cys581/Cys585, Cys597/Cys620, and Cys607/Cys644. Asn623 and Asn645 each carry an N-linked (GlcNAc...) (high mannose) asparagine; by host glycan. A disulfide bridge links Cys652 with Cys677. The segment at 660 to 671 (SELSPLLLSTTQ) is EIF2AK2/eIF2-alpha phosphorylation homology domain (PePHD). Residues 726 to 746 (LADARVCSCLWMMLLISQAEA) form a helical membrane-spanning segment. Residues 747-757 (ALENLVILNAA) are Lumenal-facing. The helical transmembrane segment at 758-778 (SLAGTHGLVSFLVFFCFAWYL) threads the bilayer. Residues 779–781 (KGR) are Cytoplasmic-facing. The chain crosses the membrane as a helical span at residues 782–803 (WVPGAVYALYGMWPLLLLLLAL). Topologically, residues 804–813 (PQRAYALDTE) are lumenal. The helical transmembrane segment at 814–834 (VAASCGGVVLVGLMALTLSPY) threads the bilayer. At 835-838 (YKRY) the chain is on the cytoplasmic side. The chain crosses the membrane as a helical span at residues 839–859 (ISWCMWWLQYFLTRVEAQLHV). Over 860 to 881 (WVPPLNVRGGRDAVILLTCVVH) the chain is Lumenal. A helical transmembrane segment spans residues 882-902 (PALVFDITKLLLAIFGPLWIL). One can recognise a Peptidase C18 domain in the interval 899-1026 (LWILQASLLK…GMVSKGWRLL (128 aa)). Residues 903-1657 (QASLLKVPYF…CMSADLEVVT (755 aa)) are Cytoplasmic-facing. A protease NS2-3 region spans residues 904 to 1206 (ASLLKVPYFV…PVENLETTMR (303 aa)). Cys922 carries the S-palmitoyl cysteine; by host lipid modification. Residues 929-949 (AGGHYVQMAIIKLGALTGTCV) form an interaction with host SCPS1 region. Active-site for protease NS2 activity; shared with dimeric partner residues include His952, Glu972, and Cys993. A Peptidase S29 domain is found at 1027–1208 (APITAYAQQT…ENLETTMRSP (182 aa)). Catalysis depends on charge relay system; for serine protease NS3 activity residues His1083 and Asp1107. Zn(2+)-binding residues include Cys1123 and Cys1125. Ser1165 acts as the Charge relay system; for serine protease NS3 activity in catalysis. 2 residues coordinate Zn(2+): Cys1171 and His1175. The region spanning 1217–1369 (PAVPQSFQVA…PNIEEVALST (153 aa)) is the Helicase ATP-binding domain. 1230-1237 (APTGSGKS) lines the ATP pocket. The Mg(2+) site is built by Ser1237 and Glu1317. Positions 1316 to 1319 (DECH) match the DECH box motif. Positions 1486–1497 (QRRGRTGRGKPG) are RNA-binding. A helical membrane pass occupies residues 1658 to 1678 (STWVLVGGVLAALAAYCLSTG). Positions 1679 to 1690 (CVVIVGRIVLSG) are NS3-binding. Over 1679-1805 (CVVIVGRIVL…AVTSPLTTGQ (127 aa)) the chain is Cytoplasmic. Residues 1806-1824 (TLLFNILGGWVAAQLAAPG) form a helical membrane-spanning segment. Over 1825-1828 (AATA) the chain is Lumenal. A helical membrane pass occupies residues 1829-1849 (FVGAGLAGAALDSVGLGKVLV). The tract at residues 1833–1861 (GLAGAALDSVGLGKVLVDILAGYGAGVAG) is glycine zipper. Residue Asp1850 is a topological domain, cytoplasmic. A helical membrane pass occupies residues 1851–1871 (ILAGYGAGVAGALVAFKIMSG). The Lumenal segment spans residues 1872–1881 (EVPSTEDLVN). The chain crosses the membrane as a helical span at residues 1882–1902 (LLPAILSPGALAVGVVFASIL). Residues 1903–1972 (RRRVGPGEGA…WISSECTTPC (70 aa)) lie on the Cytoplasmic side of the membrane. Cys1968 is lipidated: S-palmitoyl cysteine; by host. Cys1972 carries the S-palmitoyl cysteine; by host; partial lipid modification. Residues 1973–2003 (SGSWLRDIWDWICEVLSDFKTWLKAKLMPQL) lie within the membrane without spanning it. The interval 1978 to 1998 (RDIWDWICEVLSDFKTWLKAK) is membrane-binding. The Cytoplasmic portion of the chain corresponds to 2004–2990 (PGIPFVSCQR…YHSVSHARPR (987 aa)). A D1; RNA-binding region spans residues 2005–2221 (GIPFVSCQRG…KATCTANHDS (217 aa)). Zn(2+)-binding residues include Cys2011, Cys2029, Cys2031, and Cys2052. The segment at 2120–2208 (EFFTELDGVR…ASSSASQLSA (89 aa)) is FKBP8-binding. Residues 2120–2332 (EFFTELDGVR…PVPPPRKKRT (213 aa)) are transcriptional activation. An interaction with non-structural protein 4A region spans residues 2135-2139 (PPCKP). The tract at residues 2189–2441 (RLARGSPPSM…TPCAAEEQKL (253 aa)) is interaction with host SKP2. Ser2194 carries the post-translational modification Phosphoserine; by host; in p56. At Ser2197 the chain carries Phosphoserine; by host; in p58. Ser2201 is modified (phosphoserine; by host; in p56 and p58, regulates intracellular NS5A distribution). Phosphoserine; by host; in p58 is present on residues Ser2204, Ser2207, and Ser2210. Residues 2210–2249 (SLKATCTANHDSPDAELIEANLLWRQEMGGNITRVESENK) form an ISDR region. The interaction with EIF2AK2/PKR stretch occupies residues 2210 to 2275 (SLKATCTANH…REVSVPAEIL (66 aa)). Residues 2223–2315 (DAELIEANLL…YEPPVVHGCP (93 aa)) form a D2 region. The interval 2224–2315 (AELIEANLLW…YEPPVVHGCP (92 aa)) is disordered. Residues 2249–2306 (KVVILDSFDPLVAEEDEREVSVPAEILRKSRRFAPALPVWARPDYNPLLVETWKKPDY) form an NS4B-binding region. The tract at residues 2281–2297 (FAPALPVWARPDYNPLL) is interaction with human PPIA/CYPA. Pro residues predominate over residues 2315-2326 (PLPPPRSPPVPP). Residue Ser2321 is modified to Phosphoserine; by host. The SH3-binding motif lies at 2322-2325 (PPVP). Positions 2326-2334 (PPRKKRTVV) match the Nuclear localization signal motif. Positions 2329–2420 (KKRTVVLTES…GADTEDVVCC (92 aa)) are D3. Residues 2332 to 2441 (TVVLTESTLP…TPCAAEEQKL (110 aa)) form an interaction with host IFI27 region. Positions 2346 to 2409 (ELATKSFGSS…LSDGSWSTVS (64 aa)) are disordered. The span at 2349–2369 (TKSFGSSSTSGITGDNTTTSS) shows a compositional bias: low complexity. Lys2350 participates in a covalent cross-link: Glycyl lysine isopeptide (Lys-Gly) (interchain with G-Cter in ubiquitin). A V3 region spans residues 2354–2377 (SSSTSGITGDNTTTSSEPAPSGCP). Residues 2367 to 2417 (TSSEPAPSGCPPDSDVESYSSMPPLEGEPGDPDLSDGSWSTVSSGADTEDV) are interaction with host VAPB. Phosphoserine; by host occurs at positions 2449 and 2462. The RdRp catalytic domain occupies 2634–2752 (PMGLSYDTRC…ICESAGVQED (119 aa)). Positions 2640, 2738, and 2739 each coordinate Mg(2+). Residues 2991-3011 (WFWFCLLLLAAGVGIYLLPNR) form a helical membrane-spanning segment.

It belongs to the hepacivirus polyprotein family. In terms of assembly, homooligomer. Interacts with E1 (via C-terminus). Interacts with the non-structural protein 5A. Interacts (via N-terminus) with host STAT1 (via SH2 domain); this interaction results in decreased STAT1 phosphorylation and ubiquitin-mediated proteasome-dependent STAT1 degradation, leading to decreased IFN-stimulated gene transcription. Interacts with host STAT3; this interaction constitutively activates STAT3. Associates with host LTBR receptor. Interacts with host TNFRSF1A receptor and possibly induces apoptosis. Interacts with host HNRPK. Interacts with host YWHAE. Interacts with host UBE3A/E6AP. Interacts with host DDX3X. Interacts with host APOA2. Interacts with host RXRA protein. Interacts with host SP110 isoform 3/Sp110b; this interaction sequesters the transcriptional corepressor SP110 away from the nucleus. Interacts with host CREB3 nuclear transcription protein; this interaction triggers cell transformation. Interacts with host ACY3. Interacts with host C1QR1. Interacts with host RBM24; this interaction, which enhances the interaction of the mature core protein with 5'-UTR, may inhibit viral translation and favor replication. Interacts (via N-terminus) with host EIF2AK2/PKR (via N-terminus); this interaction induces the autophosphorylation of EIF2AK2. Part of the viral assembly initiation complex composed of NS2, E1, E2, NS3, NS4A, NS5A and the mature core protein. As to quaternary structure, forms a heterodimer with envelope glycoprotein E2. Interacts with mature core protein. Interacts with protease NS2. The heterodimer E1/E2 interacts with host CLDN1; this interaction plays a role in viral entry into host cell. Interacts with host SPSB2 (via C-terminus). Part of the viral assembly initiation complex composed of NS2, E1, E2, NS3, NS4A, NS5A and the mature core protein. Interacts with host NEURL3; this interaction prevents E1 binding to glycoprotein E2. Forms a heterodimer with envelope glycoprotein E1. Interacts with host CD81 and SCARB1 receptors; these interactions play a role in viral entry into host cell. Interacts with host EIF2AK2/PKR; this interaction inhibits EIF2AK2 and probably allows the virus to evade the innate immune response. Interacts with host CD209/DC-SIGN and CLEC4M/DC-SIGNR. Interact with host SPCS1; this interaction is essential for viral particle assembly. Interacts with protease NS2. The heterodimer E1/E2 interacts with host CLDN1; this interaction plays a role in viral entry into host cell. Part of the viral assembly initiation complex composed of NS2, E1, E2, NS3, NS4A, NS5A and the mature core protein. Interacts with host SLC3A2/4F2hc; the interaction may facilitate viral entry into host cell. Interacts with human PLSCR1. In terms of assembly, homohexamer. Homoheptamer. Interacts with protease NS2. As to quaternary structure, homodimer. Interacts with host SPCS1; this interaction is essential for viral particle assembly. Interacts with envelope glycoprotein E1. Interacts with envelope glycoprotein E2. Interacts with viroporin p7. Interacts with serine protease/helicase NS3. Part of the replication complex composed of NS2, NS3, NS4A, NS4B, NS5A and the RNA-directed RNA polymerase embedded in an ER-derived membranous web. Part of the viral assembly initiation complex composed of NS2, E1, E2, NS3, NS4A, NS5A and the mature core protein. Interacts with protease NS2. Interacts with non-structural protein 4A; this interaction stabilizes the folding of NS3 serine protease. NS3-NS4A interaction is essential for NS3 activation and allows membrane anchorage of the latter. NS3/NS4A complex also prevents phosphorylation of host IRF3, thus preventing the establishment of dsRNA induced antiviral state. Interacts with host MAVS; this interaction leads to the cleavage and inhibition of host MAVS. Interacts with host TICAM1; this interaction leads to the cleavage and inhibition of host TICAM1. Interacts with host TANK-binding kinase/TBK1; this interaction results in the inhibition of the association between TBK1 and IRF3, which leads to the inhibition of IRF3 activation. Interacts with host RBM24. Part of the replication complex composed of NS2, NS3, NS4A, NS4B, NS5A and the RNA-directed RNA polymerase embedded in an ER-derived membranous web. Part of the viral assembly initiation complex composed of NS2, E1, E2, NS3, NS4A, NS5A and the mature core protein. In terms of assembly, interacts with NS3 serine protease; this interaction stabilizes the folding of NS3 serine protease. NS3-NS4A interaction is essential for NS3 activation and allows membrane anchorage of the latter. Interacts with non-structural protein 5A (via N-terminus). Part of the replication complex composed of NS2, NS3, NS4A, NS4B, NS5A and the RNA-directed RNA polymerase embedded in an ER-derived membranous web. Part of the viral assembly initiation complex composed of NS2, E1, E2, NS3, NS4A, NS5A and the mature core protein. As to quaternary structure, homomultimer. Interacts with non-structural protein NS5A. Interacts with host PLA2G4C; this interaction likely initiates the recruitment of replication complexes to lipid droplets. Interacts with host STING; this interaction disrupts the interaction between STING and TBK1 thereby suppressing the interferon signaling. Interacts with host METTL22; this interaction may promote the recruitment of NS4B in the proximity of lipid droplet. Part of the replication complex composed of NS2, NS3, NS4A, NS4B, NS5A and the RNA-directed RNA polymerase embedded in an ER-derived membranous web. Monomer. Homodimer; dimerization is required for RNA-binding. Interacts with the mature core protein. Interacts (via N-terminus) with non-structural protein 4A. Interacts with non-structural protein 4B. Interacts (via region D2) with RNA-directed RNA polymerase. Part of the viral assembly initiation complex composed of NS2, E1, E2, NS3, NS4A, NS5A and the mature core protein. Part of the replication complex composed of NS2, NS3, NS4A, NS4B, NS5A and the RNA-directed RNA polymerase embedded in an ER-derived membranous web. Interacts with host GRB2. Interacts with host BIN1. Interacts with host PIK3R1. Interacts with host SRCAP. Interacts with host FKBP8. Interacts (via C-terminus) with host VAPB (via MSP domain). Interacts with host EIF2AK2/PKR; this interaction leads to disruption of EIF2AK2 dimerization by NS5A and probably allows the virus to evade the innate immune response. Interacts (via N-terminus) with host PACSIN2 (via N-terminus); this interaction attenuates protein kinase C alpha-mediated phosphorylation of PACSIN2 by disrupting the interaction between PACSIN2 and PRKCA. Interacts (via N-terminus) with host SRC kinase (via SH2 domain). Interacts with most Src-family kinases. Interacts with host IFI27 and SKP2; promotes the ubiquitin-mediated proteasomal degradation of NS5A. Interacts with host GPS2. Interacts with host TNFRSF21; this interaction allows the modulation by the virus of JNK, p38 MAPK, STAT3, and Akt signaling pathways in a DR6-dependent manner. Interacts (via N-terminus) with host CIDEB (via N-terminus); this interaction seems to regulate the association of HCV particles with APOE. Interacts with host CHKA/Choline Kinase-alpha; CHKA bridges host PI4KA and NS5A and potentiates NS5A-stimulated PI4KA activity, which then facilitates the targeting of the ternary complex to the ER for viral replication. Interacts with host SPSB2 (via C-terminus); this interaction targets NS5A for ubiquitination and degradation. Interacts with host RAB18; this interaction may promote the association of NS5A and other replicase components with lipid droplets. Interacts (via region D2) with host PPIA/CYPA; the interaction stimulates RNA-binding ability of NS5A and is dependent on the peptidyl-prolyl cis-trans isomerase activity of PPIA/CYPA. Interacts with host TRIM14; this interaction induces the degradation of NS5A. In terms of assembly, homooligomer. Interacts with non-structural protein 5A. Interacts with host VAPB. Interacts with host PRK2/PKN2. Interacts with host HNRNPA1 and SEPT6; these interactions facilitate the viral replication. Part of the replication complex composed of NS2, NS3, NS4A, NS4B, NS5A and the RNA-directed RNA polymerase embedded in an ER-derived membranous web. The cofactor is Zn(2+). Requires Mg(2+) as cofactor. Post-translationally, specific enzymatic cleavages in vivo yield mature proteins. The structural proteins, core, E1, E2 and p7 are produced by proteolytic processing by host signal peptidases. The core protein precursor is synthesized as a 23 kDa, which is retained in the ER membrane through the hydrophobic signal peptide. Cleavage by the signal peptidase releases the 21 kDa mature core protein. The cleavage of the core protein precursor occurs between aminoacids 176 and 188 but the exact cleavage site is not known. Some degraded forms of the core protein appear as well during the course of infection. The other proteins (p7, NS2, NS3, NS4A, NS4B, NS5A and NS5B) are cleaved by the viral proteases. Autoprocessing between NS2 and NS3 is mediated by the NS2 cysteine protease catalytic domain and regulated by the NS3 N-terminal domain. Phosphorylated by host PKC and PKA. In terms of processing, ubiquitinated; mediated by UBE3A and leading to core protein subsequent proteasomal degradation. Post-translationally, highly N-glycosylated. Palmitoylation is required for NS2/3 autoprocessing and E2 recruitment to membranes. In terms of processing, palmitoylated. This modification may play a role in its polymerization or in protein-protein interactions. Post-translationally, cleaved by host caspases which are probably activated by the viral infection. Ubiquitinated. Ubiquitination, most probably at Lys-2350, mediated by host IFI27 and SKP2 leads to proteasomal degradation, restricting viral infection. Ubiquitination by host TRIM22 leads to interruption of viral replication. In terms of processing, phosphorylated on serines in a basal form termed p56. p58 is a hyperphosphorylated form of p56. p56 and p58 coexist in the cell in roughly equivalent amounts. Hyperphosphorylation is dependent on the presence of NS4A. Host CSNK1A1/CKI-alpha, PI4KA or RPS6KB1 kinases may be responsible for NS5A phosphorylation. Phosphorylated NS5A is involved in viral replication. Post-translationally, tyrosine phosphorylation is essential for the interaction with host SRC. The N-terminus is phosphorylated by host PRK2/PKN2.

It is found in the host endoplasmic reticulum membrane. Its subcellular location is the host mitochondrion membrane. The protein localises to the virion. The protein resides in the host cytoplasm. It localises to the host nucleus. It is found in the host lipid droplet. Its subcellular location is the virion membrane. The protein localises to the host mitochondrion. The protein resides in the host cell membrane. It localises to the host perinuclear region. It carries out the reaction Hydrolysis of four peptide bonds in the viral precursor polyprotein, commonly with Asp or Glu in the P6 position, Cys or Thr in P1 and Ser or Ala in P1'.. It catalyses the reaction a ribonucleoside 5'-triphosphate + H2O = a ribonucleoside 5'-diphosphate + phosphate + H(+). The enzyme catalyses ATP + H2O = ADP + phosphate + H(+). The catalysed reaction is RNA(n) + a ribonucleoside 5'-triphosphate = RNA(n+1) + diphosphate. With respect to regulation, inhibited by the antiviral drug hexamethylene amiloride. Inhibited by amantadine. Inhibition by amantadine appears to be genotype-dependent. Also inhibited by long-alkyl-chain iminosugar derivatives. Its activity is regulated as follows. Activity is up-regulated by PRK2/PKN2-mediated phosphorylation. Functionally, packages viral RNA to form a viral nucleocapsid, and promotes virion budding. Participates in the viral particle production as a result of its interaction with the non-structural protein 5A. Binds RNA and may function as a RNA chaperone to induce the RNA structural rearrangements taking place during virus replication. Modulates viral translation initiation by interacting with viral IRES and 40S ribosomal subunit. Affects various cell signaling pathways, host immunity and lipid metabolism. Prevents the establishment of cellular antiviral state by blocking the interferon-alpha/beta (IFN-alpha/beta) and IFN-gamma signaling pathways and by blocking the formation of phosphorylated STAT1 and promoting ubiquitin-mediated proteasome-dependent degradation of STAT1. Activates STAT3 leading to cellular transformation. Regulates the activity of cellular genes, including c-myc and c-fos. May repress the promoter of p53, and sequester CREB3 and SP110 isoform 3/Sp110b in the cytoplasm. Represses cell cycle negative regulating factor CDKN1A, thereby interrupting an important check point of normal cell cycle regulation. Targets transcription factors involved in the regulation of inflammatory responses and in the immune response: suppresses NF-kappa-B activation, and activates AP-1. Binds to dendritic cells (DCs) via C1QR1, resulting in down-regulation of T-lymphocytes proliferation. Alters lipid metabolism by interacting with hepatocellular proteins involved in lipid accumulation and storage. Induces up-regulation of FAS promoter activity, and thereby contributes to the increased triglyceride accumulation in hepatocytes (steatosis). Its function is as follows. Forms a heterodimer with envelope glycoprotein E2, which mediates virus attachment to the host cell, virion internalization through clathrin-dependent endocytosis and fusion with host membrane. Fusion with the host cell is most likely mediated by both E1 and E2, through conformational rearrangements of the heterodimer required for fusion rather than a classical class II fusion mechanism. E1/E2 heterodimer binds host apolipoproteins such as APOB and APOE thereby forming a lipo-viro-particle (LVP). APOE associated to the LVP allows the initial virus attachment to cell surface receptors such as the heparan sulfate proteoglycans (HSPGs), syndecan-1 (SDC1), syndecan-1 (SDC2), the low-density lipoprotein receptor (LDLR) and scavenger receptor class B type I (SCARB1). The cholesterol transfer activity of SCARB1 allows E2 exposure and binding of E2 to SCARB1 and the tetraspanin CD81. E1/E2 heterodimer binding on CD81 activates the epithelial growth factor receptor (EGFR) signaling pathway. Diffusion of the complex E1/E2-EGFR-SCARB1-CD81 to the cell lateral membrane allows further interaction with Claudin 1 (CLDN1) and occludin (OCLN) to finally trigger HCV entry. In terms of biological role, forms a heterodimer with envelope glycoprotein E1, which mediates virus attachment to the host cell, virion internalization through clathrin-dependent endocytosis and fusion with host membrane. Fusion with the host cell is most likely mediated by both E1 and E2, through conformational rearrangements of the heterodimer required for fusion rather than a classical class II fusion mechanism. The interaction between E2 and host apolipoprotein E/APOE allows the proper assembly, maturation and infectivity of the viral particles. This interaction is probably promoted via the up-regulation of cellular autophagy by the virus. E1/E2 heterodimer binds host apolipoproteins such as APOB and APOE thereby forming a lipo-viro-particle (LVP). APOE associated to the LVP allows the initial virus attachment to cell surface receptors such as the heparan sulfate proteoglycans (HSPGs), syndecan-1 (SDC1), syndecan-1 (SDC2), the low-density lipoprotein receptor (LDLR) and scavenger receptor class B type I (SCARB1). The cholesterol transfer activity of SCARB1 allows E2 exposure and binding of E2 to SCARB1 and the tetraspanin CD81. E1/E2 heterodimer binding on CD81 activates the epithelial growth factor receptor (EGFR) signaling pathway. Diffusion of the complex E1/E2-EGFR-SCARB1-CD81 to the cell lateral membrane allows further interaction with Claudin 1 (CLDN1) and occludin (OCLN) to finally trigger HCV entry. Inhibits host EIF2AK2/PKR activation, preventing the establishment of an antiviral state. Viral ligand for CD209/DC-SIGN and CLEC4M/DC-SIGNR, which are respectively found on DCs, and on liver sinusoidal endothelial cells and macrophage-like cells of lymph node sinuses. These interactions allow the capture of circulating HCV particles by these cells and subsequent facilitated transmission to permissive cells such as hepatocytes and lymphocyte subpopulations. The interaction between E2 and host amino acid transporter complex formed by SLC3A2 and SLC7A5/LAT1 may facilitate viral entry into host cell. Ion channel protein that acts as a viroporin and plays an essential role in the assembly, envelopment and secretion of viral particles. Participates in virus envelopment by coordinating the encounter between NS5A and NS2-based assembly sites loaded with E1/E2 heterodimer, which subsequently leads to nucleocapsid envelopment. Creates a pore in acidic organelles and releases Ca(2+) and H(+) in the cytoplasm of infected cells, leading to a productive viral infection. High levels of cytoplasmic Ca(2+) may trigger membrane trafficking and transport of viral ER-associated proteins to viroplasms, sites of viral genome replication. The release of Ca(2+) may also activate the inflamasome leading to chronic inflammation. Targets also host mitochondria and induces mitochondrial depolarization. In addition of its role as a viroporin, acts as a lipid raft adhesion factor. Functionally, cysteine protease required for the proteolytic auto-cleavage between the non-structural proteins NS2 and NS3. The N-terminus of NS3 is required for the function of NS2 protease (active region NS2-3). Promotes the initiation of viral particle assembly by mediating the interaction between structural and non-structural proteins. Its function is as follows. Displays three enzymatic activities: serine protease with a chymotrypsin-like fold, NTPase and RNA helicase. NS3 serine protease, in association with NS4A, is responsible for the cleavages of NS3-NS4A, NS4A-NS4B, NS4B-NS5A and NS5A-NS5B. The NS3/NS4A complex prevents phosphorylation of host IRF3, thus preventing the establishment of dsRNA induced antiviral state. The NS3/NS4A complex induces host amino acid transporter component SLC3A2, thus contributing to HCV propagation. NS3 RNA helicase binds to RNA and unwinds both dsDNA and dsRNA in the 3' to 5' direction, and likely resolves RNA complicated stable secondary structures in the template strand. Binds a single ATP and catalyzes the unzipping of a single base pair of dsRNA. Inhibits host antiviral proteins TBK1 and IRF3 thereby preventing the establishment of an antiviral state. Cleaves host MAVS/CARDIF thereby preventing the establishment of an antiviral state. Cleaves host TICAM1/TRIF, thereby disrupting TLR3 signaling and preventing the establishment of an antiviral state. In terms of biological role, peptide cofactor which forms a non-covalent complex with the N-terminal of NS3 serine protease. The NS3/NS4A complex prevents phosphorylation of host IRF3, thus preventing the establishment of dsRNA induced antiviral state. The NS3/NS4A complex induces host amino acid transporter component SLC3A2, thus contributing to HCV propagation. Induces a specific membrane alteration that serves as a scaffold for the virus replication complex. This membrane alteration gives rise to the so-called ER-derived membranous web that contains the replication complex. NS4B self-interaction contributes to its function in membranous web formation. Promotes host TRIF protein degradation in a CASP8-dependent manner thereby inhibiting host TLR3-mediated interferon signaling. Disrupts the interaction between STING and TBK1 contributing to the inhibition of interferon signaling. Functionally, phosphorylated protein that is indispensable for viral replication and assembly. Both hypo- and hyperphosphorylated states are required for the viral life cycle. The hyperphosphorylated form of NS5A is an inhibitor of viral replication. Involved in RNA-binding and especially in binding to the viral genome. Zinc is essential for RNA-binding. Participates in the viral particle production as a result of its interaction with the viral mature core protein. Its interaction with host VAPB may target the viral replication complex to vesicles. Down-regulates viral IRES translation initiation. Mediates interferon resistance, presumably by interacting with and inhibiting host EIF2AK2/PKR. Prevents BIN1-induced apoptosis. Acts as a transcriptional activator of some host genes important for viral replication when localized in the nucleus. Via the interaction with host PACSIN2, modulates lipid droplet formation in order to promote virion assembly. Modulates TNFRSF21/DR6 signaling pathway for viral propagation. Its function is as follows. RNA-dependent RNA polymerase that performs primer-template recognition and RNA synthesis during viral replication. Initiates RNA transcription/replication at a flavin adenine dinucleotide (FAD), resulting in a 5'- FAD cap on viral RNAs. In this way, recognition of viral 5' RNA by host pattern recognition receptors can be bypassed, thereby evading activation of antiviral pathways. The polypeptide is Genome polyprotein (Homo sapiens (Human)).